Reading from the N-terminus, the 98-residue chain is Aspartyl/glutamyl-tRNA(Asn/Gln) amidotransferase subunit C (98 aa).

Positions 75 to 98 are disordered; that stretch reads EQALSGAPDSDDNRFKVPAILDEA.

Belongs to the GatC family. As to quaternary structure, heterotrimer of A, B and C subunits.

It catalyses the reaction L-glutamyl-tRNA(Gln) + L-glutamine + ATP + H2O = L-glutaminyl-tRNA(Gln) + L-glutamate + ADP + phosphate + H(+). The enzyme catalyses L-aspartyl-tRNA(Asn) + L-glutamine + ATP + H2O = L-asparaginyl-tRNA(Asn) + L-glutamate + ADP + phosphate + 2 H(+). Functionally, allows the formation of correctly charged Asn-tRNA(Asn) or Gln-tRNA(Gln) through the transamidation of misacylated Asp-tRNA(Asn) or Glu-tRNA(Gln) in organisms which lack either or both of asparaginyl-tRNA or glutaminyl-tRNA synthetases. The reaction takes place in the presence of glutamine and ATP through an activated phospho-Asp-tRNA(Asn) or phospho-Glu-tRNA(Gln). This Pseudarthrobacter chlorophenolicus (strain ATCC 700700 / DSM 12829 / CIP 107037 / JCM 12360 / KCTC 9906 / NCIMB 13794 / A6) (Arthrobacter chlorophenolicus) protein is Aspartyl/glutamyl-tRNA(Asn/Gln) amidotransferase subunit C.